We begin with the raw amino-acid sequence, 87 residues long: Phosphoribosyl-ATP pyrophosphatase (87 aa).

This sequence belongs to the PRA-PH family.

The protein localises to the cytoplasm. It carries out the reaction 1-(5-phospho-beta-D-ribosyl)-ATP + H2O = 1-(5-phospho-beta-D-ribosyl)-5'-AMP + diphosphate + H(+). Its pathway is amino-acid biosynthesis; L-histidine biosynthesis; L-histidine from 5-phospho-alpha-D-ribose 1-diphosphate: step 2/9. This Kocuria rhizophila (strain ATCC 9341 / DSM 348 / NBRC 103217 / DC2201) protein is Phosphoribosyl-ATP pyrophosphatase.